The following is a 192-amino-acid chain: ATP synthase protein MI25 (192 aa).

A helical transmembrane segment spans residues 29 to 49 (ISIYNEEMIVARCFIGFLIFS).

Belongs to the ATPase protein MI25 family. As to quaternary structure, F-type ATPases have 2 components, CF(1) - the catalytic core - and CF(0) - the membrane proton channel. CF(1) has five subunits: alpha(3), beta(3), gamma(1), delta(1), epsilon(1). CF(0) has three main subunits: a, b and c.

It localises to the mitochondrion membrane. Its function is as follows. This is one of the chains of the nonenzymatic component (CF(0) subunit) of the mitochondrial ATPase complex. In Triticum timopheevii (Timopheev's wheat), this protein is ATP synthase protein MI25.